The chain runs to 242 residues: UPF0309 protein BOV_A0853 (242 aa).

One can recognise an SIS domain in the interval 30–209; sequence AADLIAAAAR…FADVAARLVG (180 aa).

It belongs to the UPF0309 family.

The protein is UPF0309 protein BOV_A0853 of Brucella ovis (strain ATCC 25840 / 63/290 / NCTC 10512).